The following is a 349-amino-acid chain: tRNA pseudouridine synthase D (349 aa).

Phe26 contributes to the substrate binding site. Asp79 serves as the catalytic Nucleophile. Asn128 contacts substrate. A TRUD domain is found at 154–302; sequence GVPNYFGEQR…VEGCRRAILV (149 aa). Position 328 (Phe328) interacts with substrate.

The protein belongs to the pseudouridine synthase TruD family.

It catalyses the reaction uridine(13) in tRNA = pseudouridine(13) in tRNA. Functionally, responsible for synthesis of pseudouridine from uracil-13 in transfer RNAs. In Photorhabdus laumondii subsp. laumondii (strain DSM 15139 / CIP 105565 / TT01) (Photorhabdus luminescens subsp. laumondii), this protein is tRNA pseudouridine synthase D.